The primary structure comprises 763 residues: Phosphoglycerol transferase I (763 aa).

4 helical membrane-spanning segments follow: residues 1 to 21 (MSEL…AWKA), 26 to 46 (WWFA…ITLY), 77 to 97 (ILPG…LGWI), and 108 to 128 (VGYS…SPAF).

This sequence belongs to the OpgB family.

It is found in the cell inner membrane. The enzyme catalyses a phosphatidylglycerol + a membrane-derived-oligosaccharide D-glucose = a 1,2-diacyl-sn-glycerol + a membrane-derived-oligosaccharide 6-(glycerophospho)-D-glucose.. It functions in the pathway glycan metabolism; osmoregulated periplasmic glucan (OPG) biosynthesis. In terms of biological role, transfers a phosphoglycerol residue from phosphatidylglycerol to the membrane-bound nascent glucan backbones. This Salmonella paratyphi B (strain ATCC BAA-1250 / SPB7) protein is Phosphoglycerol transferase I.